Reading from the N-terminus, the 278-residue chain is MEDVLSTHFDRIEKALSTLVDSIAAYNPSPQAAIDLVAADDQLSHGLDQLSRHQANHARILTLRAQVEALEEQKKSSVTALATLRHELHATPATSFPADTRPVRFDELLQYAKNISQYTVPPTYRERAPEAASDKDRDKDDAASSGVNTPAHAPAQPDSDAPKDRDNADNKPAEVTAEEEEWLEKLQKSQIAWYPWPSEEKIRIGNLSKLMYWQARGKDVDDFDIPAHEEAQRKGLAGVVEAPPEPEPVAEPVQAQAPRPARPAQPQATFDMFDDLDD.

The stretch at 57 to 88 forms a coiled coil; sequence HARILTLRAQVEALEEQKKSSVTALATLRHEL. 2 disordered regions span residues 120 to 181 and 240 to 278; these read VPPT…EEEE and VEAP…DLDD. Basic and acidic residues-rich tracts occupy residues 124–142 and 160–172; these read YRER…KDDA and DAPK…DNKP. Low complexity predominate over residues 250 to 268; sequence AEPVQAQAPRPARPAQPQA.

The protein belongs to the Mediator complex subunit 4 family. As to quaternary structure, component of the Mediator complex.

The protein localises to the nucleus. Functionally, component of the Mediator complex, a coactivator involved in the regulated transcription of nearly all RNA polymerase II-dependent genes. Mediator functions as a bridge to convey information from gene-specific regulatory proteins to the basal RNA polymerase II transcription machinery. Mediator is recruited to promoters by direct interactions with regulatory proteins and serves as a scaffold for the assembly of a functional preinitiation complex with RNA polymerase II and the general transcription factors. The sequence is that of Mediator of RNA polymerase II transcription subunit 4 (MED4) from Phaeosphaeria nodorum (strain SN15 / ATCC MYA-4574 / FGSC 10173) (Glume blotch fungus).